Reading from the N-terminus, the 185-residue chain is Large ribosomal subunit protein uL5 (185 aa).

This sequence belongs to the universal ribosomal protein uL5 family. As to quaternary structure, part of the 50S ribosomal subunit; part of the 5S rRNA/L5/L18/L25 subcomplex. Contacts the 5S rRNA and the P site tRNA. Forms a bridge to the 30S subunit in the 70S ribosome.

In terms of biological role, this is one of the proteins that bind and probably mediate the attachment of the 5S RNA into the large ribosomal subunit, where it forms part of the central protuberance. In the 70S ribosome it contacts protein S13 of the 30S subunit (bridge B1b), connecting the 2 subunits; this bridge is implicated in subunit movement. Contacts the P site tRNA; the 5S rRNA and some of its associated proteins might help stabilize positioning of ribosome-bound tRNAs. The chain is Large ribosomal subunit protein uL5 from Bacteroides fragilis (strain ATCC 25285 / DSM 2151 / CCUG 4856 / JCM 11019 / LMG 10263 / NCTC 9343 / Onslow / VPI 2553 / EN-2).